The sequence spans 298 residues: Bifunctional protein FolD (298 aa).

NADP(+) contacts are provided by residues 166–168 (GRS), Ser195, and Ile236.

Belongs to the tetrahydrofolate dehydrogenase/cyclohydrolase family. As to quaternary structure, homodimer.

The catalysed reaction is (6R)-5,10-methylene-5,6,7,8-tetrahydrofolate + NADP(+) = (6R)-5,10-methenyltetrahydrofolate + NADPH. It catalyses the reaction (6R)-5,10-methenyltetrahydrofolate + H2O = (6R)-10-formyltetrahydrofolate + H(+). Its pathway is one-carbon metabolism; tetrahydrofolate interconversion. In terms of biological role, catalyzes the oxidation of 5,10-methylenetetrahydrofolate to 5,10-methenyltetrahydrofolate and then the hydrolysis of 5,10-methenyltetrahydrofolate to 10-formyltetrahydrofolate. The protein is Bifunctional protein FolD of Chlorobium phaeobacteroides (strain BS1).